Reading from the N-terminus, the 951-residue chain is MLKLLLGDPNARKLKRYQPIVTDINILEEDIALLSDDQLRSKTADFRQQFENVVSFPKQRVLLDELLPEAFAVVREAAKRVLGMRHFDVQLIGGMVLHEGQIGEMKTGEGKTLVATLPSYLNALTGRGVHVVTVNDYLARRDAEWMGQVHRFLGLSVGLIQQDMSPAERRRNYACDITYATNSELGFDYLRDNMATDLSEVVQREFQYCVIDEVDSILIDEARTPLIISGQVERPQEKYQQAADVAAALERAAEQGKDGIDPEGDYEVDEKQRSCTLTDEGFAKAEQNLKVRDLFDPADPWAHYITNALKAKELFVRDVNYIVRDGEAVIVDEFTGRVMPGRRWSDGQHQAIEAKEQLAIQPETQTLASITYQNFFLLYPRLAGMTGTAKTEEVEFEKTYKLETSVIPTNQPRARADWVDQVYKTESAKWRAVANETAEIHKQGRPVLVGTTSVEKSELLSSLLSEQEIPHNLLNAKPENVEREAEIVAQAGRAGAVTIATNMAGRGTDIILGGNSDYMARLKLREVLLPRLVRPEEGHRPPVPLQRAAETGGGFAAKAAASNGSHGHVLSEARAIGSLYPCSLTDDTDQFLAELARELVKVWGDRALSVIELEDRISTAAEKAPTDDAQIAALRESIARVKTEYDVVVTQEEVRVREAGGLHVIGTERHESRRVDNQLRGRAGRQGDLGSTRFFLSLEDNLLRIFGGERVASLMNAFRVEEDMPIESGMLTRSLEGAQKKVETYYYDIRKQVFEYDEVMNNQRRAVYAERRRVLEGRGLKKQVIGYGERTMDDVVEAYVNPDLPPEEWDLDQLVSKVQEFVYLLEDLKPEQLQGLSMEELKSFLQEQLRNAYDIKEGQIEQQRPGLMREAERFFILQQIDTLWREHLQAMDALRESVGLRGYGQKDPLIEYKNEGYDMFLEMMANMRRNVIYSMFMFQPAPAPAQEAANV.

Residues glutamine 90, 108–112 (GEGKT), and aspartate 509 contribute to the ATP site.

This sequence belongs to the SecA family. Monomer and homodimer. Part of the essential Sec protein translocation apparatus which comprises SecA, SecYEG and auxiliary proteins SecDF. Other proteins may also be involved.

It is found in the cell inner membrane. The protein localises to the cellular thylakoid membrane. It localises to the cytoplasm. It catalyses the reaction ATP + H2O + cellular proteinSide 1 = ADP + phosphate + cellular proteinSide 2.. In terms of biological role, part of the Sec protein translocase complex. Interacts with the SecYEG preprotein conducting channel. Has a central role in coupling the hydrolysis of ATP to the transfer of proteins into and across the cell membrane, serving as an ATP-driven molecular motor driving the stepwise translocation of polypeptide chains across the membrane. Probably participates in protein translocation into and across both the cytoplasmic and thylakoid membranes in cyanobacterial cells. The polypeptide is Protein translocase subunit SecA (Prochlorococcus marinus (strain MIT 9303)).